Consider the following 465-residue polypeptide: Citrate synthase-like protein (465 aa).

A disordered region spans residues 13–40 (HISDMVDSTKMNGNQSQDTAGRADTPVS). Positions 21 to 31 (TKMNGNQSQDT) are enriched in polar residues. Residues histidine 357 and aspartate 413 contribute to the active site.

It belongs to the citrate synthase family.

It functions in the pathway secondary metabolite biosynthesis. In terms of biological role, citrate synthase-like protein; part of the gene cluster that mediates the biosynthesis of squalestatin S1 (SQS1, also known as zaragozic acid A), a heavily oxidized fungal polyketide that offers potent cholesterol lowering activity by targeting squalene synthase (SS). SQS1 is composed of a 2,8-dioxobicyclic[3.2.1]octane-3,4,5-tricarboxyclic acid core that is connected to two lipophilic polyketide arms. These initial steps feature the priming of an unusual benzoic acid starter unit onto the highly reducing polyketide synthase pks2, followed by oxaloacetate extension and product release to generate a tricarboxylic acid containing product. The phenylalanine ammonia lyase (PAL) M7 and the acyl-CoA ligase M9 are involved in transforming phenylalanine into benzoyl-CoA. The citrate synthase-like protein R3 is involved in connecting the C-alpha-carbons of the hexaketide chain and oxaloacetate to afford the tricarboxylic acid unit. The potential hydrolytic enzymes, M8 and M10, are in close proximity to pks2 and may participate in product release. On the other side, the tetraketide arm is synthesized by a the squalestatin tetraketide synthase pks1 and enzymatically esterified to the core in the last biosynthetic step, by the acetyltransferase M4. The biosynthesis of the tetraketide must involve 3 rounds of chain extension. After the first and second rounds methyl-transfer occurs, and in all rounds of extension the ketoreductase and dehydratase are active. The enoyl reductase and C-MeT of pks1 are not active in the final round of extension. The acetyltransferase M4 appears to have a broad substrate selectivity for its acyl CoA substrate, allowing the in vitro synthesis of novel squalestatins. The biosynthesis of SQS1 requires several oxidative steps likely performed by oxidoreductases M1, R1 and R2. Finally, in support of the identification of the cluster as being responsible for SQS1 production, the cluster contains a gene encoding a putative squalene synthase (SS) R6, suggesting a likely mechanism for self-resistance. In Phoma sp. (strain ATCC 20986 / MF5453), this protein is Citrate synthase-like protein.